The primary structure comprises 272 residues: Shikimate dehydrogenase (NADP(+)) (272 aa).

Residues 14–16 (SKS) and Thr-61 each bind shikimate. The Proton acceptor role is filled by Lys-65. Residue Glu-77 coordinates NADP(+). Residues Asn-86 and Asp-102 each coordinate shikimate. Residues 126-130 (GAGGA), 149-154 (NRTASR), and Met-213 each bind NADP(+). Tyr-215 lines the shikimate pocket. Position 237 (Gly-237) interacts with NADP(+).

Belongs to the shikimate dehydrogenase family. Homodimer.

It catalyses the reaction shikimate + NADP(+) = 3-dehydroshikimate + NADPH + H(+). It participates in metabolic intermediate biosynthesis; chorismate biosynthesis; chorismate from D-erythrose 4-phosphate and phosphoenolpyruvate: step 4/7. In terms of biological role, involved in the biosynthesis of the chorismate, which leads to the biosynthesis of aromatic amino acids. Catalyzes the reversible NADPH linked reduction of 3-dehydroshikimate (DHSA) to yield shikimate (SA). This is Shikimate dehydrogenase (NADP(+)) from Salmonella enteritidis PT4 (strain P125109).